The chain runs to 601 residues: Protein nubbin (601 aa).

Over residues 1 to 25 (MVMSELRWHTASPEDNKNSLKRDLL) the composition is skewed to basic and acidic residues. Disordered stretches follow at residues 1-32 (MVMS…PTSA), 49-94 (SRSP…AKRQ), 121-158 (KQEE…ATAS), 351-425 (PASS…ETTD), and 581-601 (INPS…YMMH). Over residues 49–68 (SRSPSPLQSNASDCDDNNSS) the composition is skewed to low complexity. The span at 135–157 (NLTSDNSRHSTQSPSNSVKSATA) shows a compositional bias: polar residues. Residues 384 to 415 (TPSTPTSGTQMSQGTTTPQPKTVASAAAARAA) show a composition bias toward low complexity. In terms of domain architecture, POU-specific spans 421 to 495 (EETTDLEELE…LLQKWLDDAD (75 aa)). The segment at residues 523-582 (RRKKRTSIETTIRGALEKAFLANQKPTSEEITQLADRLSMEKEVVRVWFCNRRQKEKRIN) is a DNA-binding region (homeobox). A compositionally biased stretch (acidic residues) spans 591 to 601 (ADDDESSYMMH).

The protein belongs to the POU transcription factor family. Class-2 subfamily. In terms of tissue distribution, initial expression in cellular blastoderm stage, then in ectodermal stripes during germband extension. Broad expression in the neuroectoderm followed by limitation to discrete subsets of CNS cells, and expression in specific PNS neurons and support cells.

It is found in the nucleus. In terms of biological role, DNA-binding regulatory protein implicated in early development. Involved in neuronal cell fate decision. Repressed directly or indirectly by the BX-C homeotic proteins. This Drosophila melanogaster (Fruit fly) protein is Protein nubbin (nub).